Reading from the N-terminus, the 402-residue chain is RNA-binding protein 42 (402 aa).

Positions 240–275 (ETASDDSVIGPSMPEPEPVHVEPVDTSTEDKKKGKQ) are disordered. Basic and acidic residues predominate over residues 256-275 (EPVHVEPVDTSTEDKKKGKQ). One can recognise an RRM domain in the interval 303–381 (FRIFCGDLGN…RPIKLRKSAW (79 aa)).

Belongs to the RRM RBM42 family.

Its subcellular location is the nucleus. It is found in the cytoplasm. May bind RNA. In Danio rerio (Zebrafish), this protein is RNA-binding protein 42 (rbm42).